Consider the following 317-residue polypeptide: TPR repeat-containing thioredoxin TDX (317 aa).

A disordered region spans residues 1–48; the sequence is MATAGASSFEDEIMESDIELEGEAVEPDNDPPQKMGDPSVEVSDEKRD. A compositionally biased stretch (acidic residues) spans 9–29; that stretch reads FEDEIMESDIELEGEAVEPDN. TPR repeat units follow at residues 50 to 83, 85 to 117, and 119 to 151; these read AQLC…NPTS, IAYA…NPDS, and KGYK…DYDE. Residues 189 to 316 enclose the Thioredoxin domain; it reads EKQRKHAEEV…LERKVAQHGS (128 aa). Catalysis depends on nucleophile residues Cys-242 and Cys-245. A disulfide bridge links Cys-242 with Cys-245.

The protein belongs to the thioredoxin family.

Its function is as follows. Probable thiol-disulfide oxidoreductase that may participate in various redox reactions and act as chaperone under heat shock. May interact with HSP70 proteins through the TPR repeats. The sequence is that of TPR repeat-containing thioredoxin TDX from Oryza sativa subsp. japonica (Rice).